The sequence spans 441 residues: Putative serine/threonine-protein kinase F31E3.2 (441 aa).

The span at Met-1–Ile-16 shows a compositional bias: basic residues. Residues Met-1–Gln-41 form a disordered region. One can recognise a Protein kinase domain in the interval Phe-126–Phe-381. Residues Leu-132 to Val-140 and Lys-156 each bind ATP. The active-site Proton acceptor is Asp-253.

The protein belongs to the protein kinase superfamily. Ser/Thr protein kinase family.

It carries out the reaction L-seryl-[protein] + ATP = O-phospho-L-seryl-[protein] + ADP + H(+). The catalysed reaction is L-threonyl-[protein] + ATP = O-phospho-L-threonyl-[protein] + ADP + H(+). The polypeptide is Putative serine/threonine-protein kinase F31E3.2 (Caenorhabditis elegans).